The chain runs to 386 residues: DNase toxin Tse7 (386 aa).

In terms of assembly, interacts with Tsi7.

It carries out the reaction Endonucleolytic cleavage to 5'-phosphodinucleotide and 5'-phosphooligonucleotide end-products.. Type VI secretion exported toxin that via to its DNase activity induces growth arrest and ultimately DNA degradation within target cell. The activity is initially neutralized by a cognate immunity protein Tsi7. This Pseudomonas aeruginosa (strain ATCC 15692 / DSM 22644 / CIP 104116 / JCM 14847 / LMG 12228 / 1C / PRS 101 / PAO1) protein is DNase toxin Tse7.